Reading from the N-terminus, the 221-residue chain is Probable serine protease inhibitor 6 (221 aa).

The first 22 residues, 1-22 (MKCLFLLCLCLFPIVVFSSTFT), serve as a signal peptide directing secretion. The propeptide occupies 23–28 (SQNPIN). The Vacuolar targeting signal signature appears at 25-30 (NPINLP). Intrachain disulfides connect C76/C125 and C174/C191.

This sequence belongs to the protease inhibitor I3 (leguminous Kunitz-type inhibitor) family.

It is found in the vacuole. Inhibitor of trypsin (serine protease). May protect the plant by inhibiting proteases of invading organisms. In Solanum tuberosum (Potato), this protein is Probable serine protease inhibitor 6.